A 363-amino-acid polypeptide reads, in one-letter code: Sulfate/thiosulfate import ATP-binding protein CysA (363 aa).

In terms of domain architecture, ABC transporter spans Ile3–Leu237. Residue Gly35–Thr42 coordinates ATP.

Belongs to the ABC transporter superfamily. Sulfate/tungstate importer (TC 3.A.1.6) family. In terms of assembly, the complex is composed of two ATP-binding proteins (CysA), two transmembrane proteins (CysT and CysW) and a solute-binding protein (CysP).

The protein localises to the cell inner membrane. The catalysed reaction is sulfate(out) + ATP + H2O = sulfate(in) + ADP + phosphate + H(+). It catalyses the reaction thiosulfate(out) + ATP + H2O = thiosulfate(in) + ADP + phosphate + H(+). Part of the ABC transporter complex CysAWTP involved in sulfate/thiosulfate import. Responsible for energy coupling to the transport system. The polypeptide is Sulfate/thiosulfate import ATP-binding protein CysA (Yersinia pseudotuberculosis serotype I (strain IP32953)).